A 262-amino-acid polypeptide reads, in one-letter code: Ribosomal RNA small subunit methyltransferase A (262 aa).

Residues I18, G43, E65, D91, and N110 each contribute to the S-adenosyl-L-methionine site.

The protein belongs to the class I-like SAM-binding methyltransferase superfamily. rRNA adenine N(6)-methyltransferase family. RsmA subfamily.

Its subcellular location is the cytoplasm. The enzyme catalyses adenosine(1518)/adenosine(1519) in 16S rRNA + 4 S-adenosyl-L-methionine = N(6)-dimethyladenosine(1518)/N(6)-dimethyladenosine(1519) in 16S rRNA + 4 S-adenosyl-L-homocysteine + 4 H(+). In terms of biological role, specifically dimethylates two adjacent adenosines (A1518 and A1519) in the loop of a conserved hairpin near the 3'-end of 16S rRNA in the 30S particle. May play a critical role in biogenesis of 30S subunits. The chain is Ribosomal RNA small subunit methyltransferase A from Ehrlichia ruminantium (strain Gardel).